Consider the following 361-residue polypeptide: Arginine N(omega)-methyltransferase (361 aa).

Residues 1-17 show a composition bias toward basic and acidic residues; sequence MRHVQEARAVPAEHEAR. Residues 1 to 24 are disordered; the sequence is MRHVQEARAVPAEHEARPAPVTMP. Residues 65–361 form the SAM-dependent MTase PRMT-type domain; the sequence is DADAFAQIAR…WSDFTLRVSI (297 aa).

Belongs to the class I-like SAM-binding methyltransferase superfamily. Protein arginine N-methyltransferase family.

The catalysed reaction is L-arginine + S-adenosyl-L-methionine = N(omega)-methyl-L-arginine + S-adenosyl-L-homocysteine + H(+). Its pathway is antibiotic biosynthesis. Functionally, involved in the biosynthesis of the glucosamine-nitrosourea antibiotic streptozotocin (SZN). Catalyzes the conversion of L-arginine to N(omega)-methyl-L-arginine (L-NMA), using S-adenosyl-L-methionine (SAM) as a methyl donor. In Streptomyces achromogenes subsp. streptozoticus, this protein is Arginine N(omega)-methyltransferase.